We begin with the raw amino-acid sequence, 257 residues long: UPF0246 protein Sputcn32_1053 (257 aa).

It belongs to the UPF0246 family.

The chain is UPF0246 protein Sputcn32_1053 from Shewanella putrefaciens (strain CN-32 / ATCC BAA-453).